The chain runs to 123 residues: Large ribosomal subunit protein bL12 (123 aa).

Belongs to the bacterial ribosomal protein bL12 family. Homodimer. Part of the ribosomal stalk of the 50S ribosomal subunit. Forms a multimeric L10(L12)X complex, where L10 forms an elongated spine to which 2 to 4 L12 dimers bind in a sequential fashion. Binds GTP-bound translation factors.

Forms part of the ribosomal stalk which helps the ribosome interact with GTP-bound translation factors. Is thus essential for accurate translation. This chain is Large ribosomal subunit protein bL12, found in Neisseria meningitidis serogroup C (strain 053442).